Reading from the N-terminus, the 708-residue chain is MEVSELPLDARLIAVLKERGVGRLFPPQVEAVRAGIFDGRSVLLCTATASGKSLLAEVAAVKAGLEGRMALYAVPLKALAYEKLVHFSYYRGLVKVGVSTGDFDSDDRRLHEFDVVVVTYEKLDSLLRHRPNWLGLVGVVVVDEIHYLGDPRRGPVLESIVAKLRHLGLKTQFIGLSATVGNAGEVAAWLGARLVESSWRPVPLREGVYHGGVIRFSDGSMQRVNAPGDAEVALAVDAVAGGGQALVFTNSRSSTVRLAKAVAKAMEAAGLVPRGAKALAEEVLKASSSKIIGRELADLVARGVAFHNAGLELEVRRLVEDGFRRGLLKVVVSTTTLAAGVNLPARRVVVADYERFDPALGREEIPVLEYRQMAGRAGRPGLDPYGEAVLVARSKGEAEYLMERYVRGQVEGVRSHILAEPNLRAHVLGAVGGGYAKSLDDLVDFFSNTLGAAQMKTSLKLSILRSKIGGVVEELVEWGFLERDGDFVYATELGRQVARLYLDPEVAAGYIRLIKSLRAGNVPAYLYVVLTAPDFPRVRRGRADKRVVEGILAALDVEEDEEFEDLARTASMLMAWIEEVDEDVIYEKFDVAPGDLRVYVDLFQWLGNAAAKLARLVGREEHGKRLEVVTARVVYGVREELLGLVTSLRGVGRVRARTLYNFGYRTLEDIARATVREIASLPGFGEKLAESVIEQARQMLAEGLRGEV.

ATP-binding positions include Gln28 and 46 to 53; that span reads TATASGKS. The Helicase ATP-binding domain maps to 33–198; that stretch reads RAGIFDGRSV…WLGARLVESS (166 aa). The DEAH box motif lies at 143 to 146; the sequence is DEIH. Residues 231 to 429 form the Helicase C-terminal domain; that stretch reads EVALAVDAVA…EPNLRAHVLG (199 aa).

Belongs to the helicase family. Hel308 subfamily. As to quaternary structure, monomer.

It catalyses the reaction Couples ATP hydrolysis with the unwinding of duplex DNA by translocating in the 3'-5' direction.. It carries out the reaction ATP + H2O = ADP + phosphate + H(+). Functionally, DNA-dependent ATPase and 3'-5' DNA helicase that may be involved in repair of stalled replication forks. This Pyrobaculum calidifontis (strain DSM 21063 / JCM 11548 / VA1) protein is ATP-dependent DNA helicase Hel308.